The following is a 292-amino-acid chain: Lipoyl synthase (292 aa).

The [4Fe-4S] cluster site is built by Cys-34, Cys-39, Cys-45, Cys-60, Cys-64, Cys-67, and Ser-273. A Radical SAM core domain is found at 46–262; it reads WNKKHATVMI…KYVAYSKGFL (217 aa).

It belongs to the radical SAM superfamily. Lipoyl synthase family. It depends on [4Fe-4S] cluster as a cofactor.

The protein resides in the cytoplasm. The catalysed reaction is [[Fe-S] cluster scaffold protein carrying a second [4Fe-4S](2+) cluster] + N(6)-octanoyl-L-lysyl-[protein] + 2 oxidized [2Fe-2S]-[ferredoxin] + 2 S-adenosyl-L-methionine + 4 H(+) = [[Fe-S] cluster scaffold protein] + N(6)-[(R)-dihydrolipoyl]-L-lysyl-[protein] + 4 Fe(3+) + 2 hydrogen sulfide + 2 5'-deoxyadenosine + 2 L-methionine + 2 reduced [2Fe-2S]-[ferredoxin]. It functions in the pathway protein modification; protein lipoylation via endogenous pathway; protein N(6)-(lipoyl)lysine from octanoyl-[acyl-carrier-protein]: step 2/2. Functionally, catalyzes the radical-mediated insertion of two sulfur atoms into the C-6 and C-8 positions of the octanoyl moiety bound to the lipoyl domains of lipoate-dependent enzymes, thereby converting the octanoylated domains into lipoylated derivatives. The protein is Lipoyl synthase of Ehrlichia ruminantium (strain Welgevonden).